We begin with the raw amino-acid sequence, 186 residues long: Casparian strip membrane protein 5 (186 aa).

The Cytoplasmic portion of the chain corresponds to 1–23; that stretch reads MEHGEISSKAPLVAPVAAGVNRA. Residues 24 to 44 form a helical membrane-spanning segment; that stretch reads VAVVDTFLRFIAIIGTIGSAI. At 45–73 the chain is on the extracellular side; that stretch reads AMGTTNETLPFFTQFIQFEAKYSDLPSFT. Asn50 is a glycosylation site (N-linked (GlcNAc...) asparagine). A helical membrane pass occupies residues 74–94; sequence FFVAANAVVCTYLVLSIPLSI. Residues 95-106 lie on the Cytoplasmic side of the membrane; sequence VHILRPRARYSR. Residues 107 to 127 traverse the membrane as a helical segment; sequence LFLVFFDTAMLALLTAGASAA. Residues 128–160 are Extracellular-facing; the sequence is AAIVYLAHKGNVRANWFSICQQFDSFCERISGS. The chain crosses the membrane as a helical span at residues 161 to 181; sequence LIGSFAAMVLLVVLITLSAFA. Topologically, residues 182–186 are cytoplasmic; sequence LARRH.

It belongs to the Casparian strip membrane proteins (CASP) family. In terms of assembly, homodimer and heterodimers.

Its subcellular location is the cell membrane. In terms of biological role, regulates membrane-cell wall junctions and localized cell wall deposition. Required for establishment of the Casparian strip membrane domain (CSD) and the subsequent formation of Casparian strips, a cell wall modification of the root endodermis that determines an apoplastic barrier between the intraorganismal apoplasm and the extraorganismal apoplasm and prevents lateral diffusion. This Oryza sativa subsp. japonica (Rice) protein is Casparian strip membrane protein 5.